The sequence spans 860 residues: Valine--tRNA ligase (860 aa).

The 'HIGH' region motif lies at 53–63; the sequence is PNLTGILHIGH. The 'KMSKS' region signature appears at 527 to 531; sequence KMSKS. Lys-530 serves as a coordination point for ATP. Residues 794 to 860 adopt a coiled-coil conformation; that stretch reads QDKTKIVDKL…LKQDKLNSLK (67 aa).

It belongs to the class-I aminoacyl-tRNA synthetase family. ValS type 1 subfamily. In terms of assembly, monomer.

It localises to the cytoplasm. The catalysed reaction is tRNA(Val) + L-valine + ATP = L-valyl-tRNA(Val) + AMP + diphosphate. Its function is as follows. Catalyzes the attachment of valine to tRNA(Val). As ValRS can inadvertently accommodate and process structurally similar amino acids such as threonine, to avoid such errors, it has a 'posttransfer' editing activity that hydrolyzes mischarged Thr-tRNA(Val) in a tRNA-dependent manner. In Mycoplasmoides gallisepticum (strain R(low / passage 15 / clone 2)) (Mycoplasma gallisepticum), this protein is Valine--tRNA ligase.